A 374-amino-acid polypeptide reads, in one-letter code: Ribosomal RNA large subunit methyltransferase G (374 aa).

The protein belongs to the methyltransferase superfamily. RlmG family.

It is found in the cytoplasm. It carries out the reaction guanosine(1835) in 23S rRNA + S-adenosyl-L-methionine = N(2)-methylguanosine(1835) in 23S rRNA + S-adenosyl-L-homocysteine + H(+). In terms of biological role, specifically methylates the guanine in position 1835 (m2G1835) of 23S rRNA. The protein is Ribosomal RNA large subunit methyltransferase G of Pseudomonas putida (strain ATCC 47054 / DSM 6125 / CFBP 8728 / NCIMB 11950 / KT2440).